A 1090-amino-acid polypeptide reads, in one-letter code: Exocyst complex component SEC5B (1090 aa).

Residues 1-12 are compositionally biased toward acidic residues; that stretch reads MSSSDDLDEDEL. Residues 1–126 are disordered; the sequence is MSSSDDLDED…ARKEDDRAWD (126 aa). Positions 23 to 46 are enriched in polar residues; sequence RDVTYQKPPSANSRKPVTNLVQQP. Residues 52–62 are compositionally biased toward low complexity; it reads AAAPPSKGGAK. The span at 96–109 shows a compositional bias: gly residues; the sequence is GGGGDGGGGRGRGG. A compositionally biased stretch (basic and acidic residues) spans 110 to 126; sequence SGKERGRARKEDDRAWD. Residue serine 179 is modified to Phosphoserine. The span at 486–502 shows a compositional bias: polar residues; sequence VQLSDDTSSMEDNQVQV. Disordered regions lie at residues 486–511, 984–1013, and 1055–1090; these read VQLS…ESAR, ETVE…QSSV, and PVAK…PRRR. The segment covering 999–1010 has biased composition (basic and acidic residues); the sequence is RGSEDAISDDKQ. A compositionally biased stretch (polar residues) spans 1062 to 1071; the sequence is SRTSTDSPSR.

Belongs to the SEC5 family. The exocyst complex is composed of SEC3, SEC5, SEC6, SEC8, SEC10, EXO70A1 and EXO84B.

Its function is as follows. Component of the exocyst complex involved in the docking of exocytic vesicles with fusion sites on the plasma membrane during regulated or polarized secretion. Involved in polarized cell growth and organ morphogenesis. During cytokinesis, involved in cell plate initiation, cell plate maturation and formation of new primary cell wall. This Arabidopsis thaliana (Mouse-ear cress) protein is Exocyst complex component SEC5B (SEC5B).